The sequence spans 967 residues: Sulfite dehydrogenase subunit A (967 aa).

The 4Fe-4S Mo/W bis-MGD-type domain maps to 15 to 71; that stretch reads VEVKETTCYMCACRCGIRVHLRDGEVRYIDGNPNHPLNKGVICAKGSSGIMKQYSPG. [4Fe-4S] cluster is bound by residues C22, C25, C29, and C57.

This sequence belongs to the prokaryotic molybdopterin-containing oxidoreductase family. In terms of assembly, forms a heterotrimeric membrane-bound complex composed of a catalytic heterodimer (SoeAB) and a membrane anchor protein (SoeC). The cofactor is [4Fe-4S] cluster. Requires Mo-bis(molybdopterin guanine dinucleotide) as cofactor.

The protein localises to the cell inner membrane. The enzyme catalyses a quinone + sulfite + H2O = a quinol + sulfate. It catalyses the reaction a menaquinone + sulfite + H2O = a menaquinol + sulfate. Its function is as follows. Part of the SoeABC complex that catalyzes the oxidation of sulfite to sulfate. This chain is Sulfite dehydrogenase subunit A, found in Allochromatium vinosum (strain ATCC 17899 / DSM 180 / NBRC 103801 / NCIMB 10441 / D) (Chromatium vinosum).